The chain runs to 428 residues: Gamma-glutamyl phosphate reductase (428 aa).

This sequence belongs to the gamma-glutamyl phosphate reductase family.

Its subcellular location is the cytoplasm. It catalyses the reaction L-glutamate 5-semialdehyde + phosphate + NADP(+) = L-glutamyl 5-phosphate + NADPH + H(+). It functions in the pathway amino-acid biosynthesis; L-proline biosynthesis; L-glutamate 5-semialdehyde from L-glutamate: step 2/2. Functionally, catalyzes the NADPH-dependent reduction of L-glutamate 5-phosphate into L-glutamate 5-semialdehyde and phosphate. The product spontaneously undergoes cyclization to form 1-pyrroline-5-carboxylate. This is Gamma-glutamyl phosphate reductase from Chelativorans sp. (strain BNC1).